Consider the following 361-residue polypeptide: UDP-N-acetylglucosamine--N-acetylmuramyl-(pentapeptide) pyrophosphoryl-undecaprenol N-acetylglucosamine transferase (361 aa).

Residues 12 to 14 (TGG), N124, R163, S189, I241, 260 to 265 (ALTVSE), and Q286 each bind UDP-N-acetyl-alpha-D-glucosamine.

Belongs to the glycosyltransferase 28 family. MurG subfamily.

Its subcellular location is the cell inner membrane. It catalyses the reaction di-trans,octa-cis-undecaprenyl diphospho-N-acetyl-alpha-D-muramoyl-L-alanyl-D-glutamyl-meso-2,6-diaminopimeloyl-D-alanyl-D-alanine + UDP-N-acetyl-alpha-D-glucosamine = di-trans,octa-cis-undecaprenyl diphospho-[N-acetyl-alpha-D-glucosaminyl-(1-&gt;4)]-N-acetyl-alpha-D-muramoyl-L-alanyl-D-glutamyl-meso-2,6-diaminopimeloyl-D-alanyl-D-alanine + UDP + H(+). It participates in cell wall biogenesis; peptidoglycan biosynthesis. Functionally, cell wall formation. Catalyzes the transfer of a GlcNAc subunit on undecaprenyl-pyrophosphoryl-MurNAc-pentapeptide (lipid intermediate I) to form undecaprenyl-pyrophosphoryl-MurNAc-(pentapeptide)GlcNAc (lipid intermediate II). The sequence is that of UDP-N-acetylglucosamine--N-acetylmuramyl-(pentapeptide) pyrophosphoryl-undecaprenol N-acetylglucosamine transferase from Aeromonas hydrophila subsp. hydrophila (strain ATCC 7966 / DSM 30187 / BCRC 13018 / CCUG 14551 / JCM 1027 / KCTC 2358 / NCIMB 9240 / NCTC 8049).